Consider the following 464-residue polypeptide: IAA-amino acid hydrolase ILR1-like 6 (464 aa).

An N-terminal signal peptide occupies residues 1–24 (MDNLRKLNLLSVSLTIIFVSLTIA). The Mn(2+) site is built by cysteine 175, histidine 177, glutamate 211, histidine 235, and histidine 433.

Belongs to the peptidase M20 family.

It carries out the reaction a jasmonyl-L-amino acid + H2O = a jasmonate + an L-alpha-amino acid. Hydrolyzes certain amino acid conjugates of the plant growth regulator indole-3-acetic acid (IAA). Also hydrolyzes amino acid conjugates of jasmonic acid and 12-hydroxy jasmonic acid. This Arabidopsis thaliana (Mouse-ear cress) protein is IAA-amino acid hydrolase ILR1-like 6.